We begin with the raw amino-acid sequence, 215 residues long: Cytochrome b6 (215 aa).

A helical membrane pass occupies residues 32–52; the sequence is IFYCLGGVTLICFLVQFATGF. Position 35 (cysteine 35) interacts with heme c. Positions 86 and 100 each coordinate heme b. A run of 3 helical transmembrane segments spans residues 90–110, 116–136, and 186–206; these read ASMM…TGGF, LTWV…VTGY, and AHTF…FLMI. Residues histidine 187 and histidine 202 each contribute to the heme b site.

It belongs to the cytochrome b family. PetB subfamily. The 4 large subunits of the cytochrome b6-f complex are cytochrome b6, subunit IV (17 kDa polypeptide, PetD), cytochrome f and the Rieske protein, while the 4 small subunits are PetG, PetL, PetM and PetN. The complex functions as a dimer. Heme b serves as cofactor. The cofactor is heme c.

The protein resides in the cell inner membrane. Component of the cytochrome b6-f complex, which mediates electron transfer between photosystem II (PSII) and photosystem I (PSI), cyclic electron flow around PSI, and state transitions. In Gloeobacter violaceus (strain ATCC 29082 / PCC 7421), this protein is Cytochrome b6.